A 699-amino-acid chain; its full sequence is MARETSINKYRNLGIMAHIDAGKTTTTERILFYTGVSHKLGEVHEGAATMDWMEQEQERGITITSAATTCFWQGMAGQFDKHRINIIDTPGHVDFTIEVERSLRVLDGACLVLCSVGGVQPQTETVWRQANKYKVPRIAYVNKMDRTGANFLRVVKQMHDRLKANAVPLQLPVGAEDTFKGVVDLIKMKEIIWDEETNGLKFEYGDIPEEMRAQAEEYREKLVEAAAESSEELMDKYLESGTLSEEEIIAGLRQRTIANEIIPVLCGSSFKNKGVQAMLDKVIELLPSPVDVPAIQGVNPNTNETEKRESTDDAPFSALAFKIATDPFVGTLTFVRCYSGVLEAGTTVLNSVKDKKERIGRIVQMHSNSRVEIKEVHAGDIAACIGLKEVVTGETLCDVNAPIILERMEFPEPVIAVAVEPKTKADQEKMGLALAKLAQEDPSFRVHTDEETGQTIISGMGELHLEIIVDRMKREFKVEANVGAPQVAYRETIRESVEQEGKFVRQSGGRGQFGHVWLRIEPQEPGFGYEFVNQIVGGVVPKEYIPAVDKGVQEQMQNGVLAGYPVVDIKVTLYDGSYHEVDSSEMAFKLAAAEGFKLGARKAKPVLLEPMMKVEVSTPEEYMGDVIGDLNSRRGLIQGMDDELTGKVIHAQVPLANMFGYATSLRSLTQGRANYSMEFDCYNEAPNNVVEEVIKSKSK.

Residues 8-290 form the tr-type G domain; it reads NKYRNLGIMA…KVIELLPSPV (283 aa). GTP contacts are provided by residues 17–24, 88–92, and 142–145; these read AHIDAGKT, DTPGH, and NKMD.

It belongs to the TRAFAC class translation factor GTPase superfamily. Classic translation factor GTPase family. EF-G/EF-2 subfamily.

The protein localises to the cytoplasm. Functionally, catalyzes the GTP-dependent ribosomal translocation step during translation elongation. During this step, the ribosome changes from the pre-translocational (PRE) to the post-translocational (POST) state as the newly formed A-site-bound peptidyl-tRNA and P-site-bound deacylated tRNA move to the P and E sites, respectively. Catalyzes the coordinated movement of the two tRNA molecules, the mRNA and conformational changes in the ribosome. The sequence is that of Elongation factor G from Dichelobacter nodosus (strain VCS1703A).